A 173-amino-acid polypeptide reads, in one-letter code: Oleosin 18.5 kDa (173 aa).

The tract at residues 1 to 45 (MADTARGTHHDIIGRDQYPMMGRDRDQYQMSGRGSDYSKSRQIAK) is polar. The segment at 46–117 (AATAVTAGGS…AAITVFSWIY (72 aa)) is hydrophobic. 3 helical membrane passes run 54–74 (GSLLVLSSLTLVGTVIALTVA), 76–96 (PLLVIFSPILVPALITVALLI), and 97–117 (TGFLSSGGFGIAAITVFSWIY). Residues 151 to 173 (YYGQQHTGGEHDRDRTRGGQHTT) form a disordered region. Positions 158–167 (GGEHDRDRTR) are enriched in basic and acidic residues.

It belongs to the oleosin family.

The protein localises to the lipid droplet. It localises to the membrane. In terms of biological role, may have a structural role to stabilize the lipid body during desiccation of the seed by preventing coalescence of the oil. Probably interacts with both lipid and phospholipid moieties of lipid bodies. May also provide recognition signals for specific lipase anchorage in lipolysis during seedling growth. The chain is Oleosin 18.5 kDa from Arabidopsis thaliana (Mouse-ear cress).